Reading from the N-terminus, the 555-residue chain is Glutamine--tRNA ligase (555 aa).

The 'HIGH' region motif lies at 34–44 (PEPNGYLHIGH). ATP contacts are provided by residues 35–37 (EPN) and 41–47 (HIGHAKS). L-glutamine contacts are provided by D67 and Y212. Residues T231, 261-262 (RL), and 269-271 (MSK) contribute to the ATP site. The 'KMSKS' region motif lies at 268-272 (IMSKR).

The protein belongs to the class-I aminoacyl-tRNA synthetase family. As to quaternary structure, monomer.

It localises to the cytoplasm. It catalyses the reaction tRNA(Gln) + L-glutamine + ATP = L-glutaminyl-tRNA(Gln) + AMP + diphosphate. The protein is Glutamine--tRNA ligase of Yersinia enterocolitica serotype O:8 / biotype 1B (strain NCTC 13174 / 8081).